We begin with the raw amino-acid sequence, 363 residues long: Protein RecA (363 aa).

79-86 contributes to the ATP binding site; it reads GPESSGKT.

This sequence belongs to the RecA family.

The protein localises to the cytoplasm. In terms of biological role, can catalyze the hydrolysis of ATP in the presence of single-stranded DNA, the ATP-dependent uptake of single-stranded DNA by duplex DNA, and the ATP-dependent hybridization of homologous single-stranded DNAs. It interacts with LexA causing its activation and leading to its autocatalytic cleavage. This is Protein RecA from Methylobacterium sp. (strain 4-46).